A 235-amino-acid polypeptide reads, in one-letter code: Alpha-S2-casein (235 aa).

A signal peptide spans 1–15 (MKFFIFTCLLAVAFA). Serine 23, serine 24, serine 25, serine 28, serine 47, serine 72, serine 73, serine 74, serine 77, serine 147, serine 149, and serine 168 each carry phosphoserine. Over residues 144-158 (EELSTSEEPVSSSQE) the composition is skewed to polar residues. Positions 144–163 (EELSTSEEPVSSSQEENTKT) are disordered.

This sequence belongs to the alpha-casein family. As to expression, mammary gland specific. Secreted in milk.

The protein localises to the secreted. Functionally, important role in the capacity of milk to transport calcium phosphate. The protein is Alpha-S2-casein (CSN1S2) of Sus scrofa (Pig).